Here is a 179-residue protein sequence, read N- to C-terminus: Putative ADP-ribosylation factor-like protein 5C (179 aa).

A lipid anchor (N-myristoyl glycine) is attached at G2. Residues 23-30 (GLDNEGKT), 66-70 (DIVRP), and 125-128 (NKQD) contribute to the GTP site.

This sequence belongs to the small GTPase superfamily. Arf family.

Binds and exchanges GTP and GDP. In Homo sapiens (Human), this protein is Putative ADP-ribosylation factor-like protein 5C (ARL5C).